A 188-amino-acid polypeptide reads, in one-letter code: ATP-dependent protease subunit HslV (188 aa).

Thr8 is an active-site residue. Na(+) contacts are provided by Ala165, Cys168, and Thr171.

This sequence belongs to the peptidase T1B family. HslV subfamily. As to quaternary structure, a double ring-shaped homohexamer of HslV is capped on each side by a ring-shaped HslU homohexamer. The assembly of the HslU/HslV complex is dependent on binding of ATP.

The protein localises to the cytoplasm. It carries out the reaction ATP-dependent cleavage of peptide bonds with broad specificity.. With respect to regulation, allosterically activated by HslU binding. Functionally, protease subunit of a proteasome-like degradation complex believed to be a general protein degrading machinery. The sequence is that of ATP-dependent protease subunit HslV from Neorickettsia sennetsu (strain ATCC VR-367 / Miyayama) (Ehrlichia sennetsu).